The chain runs to 367 residues: MEVKSAKELKRVSKELQENFLNRWKLLNLEQDKDRLKALNEKSEDPDLWNNPEEARIVSQKKNELEKKLTPWFTIQQDILDFPDLVELTLDEKGENGIGELSMEYNRLQEKFEELELLGALKNSEDLKPAFLNIHPGAGGTESQDWAEMLLRMYIRYFEKKGYQYSLIDIQAGDGAGIKNVTLHVVGDFAFGFLKGENGIHRLVRISPFDANKRRHTSFVSVHVSPEIDDEIDIKIEEKDIRVDVYRSSGAGGQHVNTTDSAVRITHLPSGIVVACQNERSQIKNRDTAFKMLKARLYEMEQEKAKEELEKKSGEKKDIAWGSQIRSYVFHPYNLVKDHRTDHETGNVAAVMDGDIEPFILAYLKTL.

Position 254 is an N5-methylglutamine (Gln254).

Belongs to the prokaryotic/mitochondrial release factor family. In terms of processing, methylated by PrmC. Methylation increases the termination efficiency of RF2.

Its subcellular location is the cytoplasm. In terms of biological role, peptide chain release factor 2 directs the termination of translation in response to the peptide chain termination codons UGA and UAA. This chain is Peptide chain release factor 2, found in Leptospira borgpetersenii serovar Hardjo-bovis (strain JB197).